The sequence spans 100 residues: Small ribosomal subunit protein uS14c (100 aa).

Positions Met1–Ile31 are disordered.

This sequence belongs to the universal ribosomal protein uS14 family. As to quaternary structure, part of the 30S ribosomal subunit.

The protein localises to the plastid. It is found in the chloroplast. Its function is as follows. Binds 16S rRNA, required for the assembly of 30S particles. This chain is Small ribosomal subunit protein uS14c, found in Atropa belladonna (Belladonna).